The primary structure comprises 200 residues: Cysteine dioxygenase type 1 (200 aa).

Residues His86, His88, and His140 each contribute to the Fe cation site. Residues Cys93–Tyr157 constitute a cross-link (3'-(S-cysteinyl)-tyrosine (Cys-Tyr)).

It belongs to the cysteine dioxygenase family. As to quaternary structure, monomer. It depends on Fe cation as a cofactor. Ni(2+) is required as a cofactor. Requires Zn(2+) as cofactor. The thioether cross-link between Cys-93 and Tyr-157 plays a structural role through stabilizing the Fe(2+) ion, and prevents the production of highly damaging free hydroxyl radicals by holding the oxygen radical via hydroxyl hydrogen.

It catalyses the reaction L-cysteine + O2 = 3-sulfino-L-alanine + H(+). The protein operates within organosulfur biosynthesis; taurine biosynthesis; hypotaurine from L-cysteine: step 1/2. Its function is as follows. Catalyzes the oxidation of cysteine to cysteine sulfinic acid with addition of molecular dioxygen. This Bos taurus (Bovine) protein is Cysteine dioxygenase type 1 (CDO1).